The primary structure comprises 575 residues: G2/mitotic-specific cyclin-B3 (575 aa).

Positions 75 to 83 (RSALGNLTN) match the D-box motif. Phosphoserine is present on S215.

The protein belongs to the cyclin family. Cyclin AB subfamily. As to quaternary structure, interacts with Cdk1 kinase. Ubiquitinated. Ubiquitination leads to its degradation in early anaphase. In terms of tissue distribution, in embryo, it is expressed in all mitotically proliferating cells, with a high level in neuroblasts. Not expressed in old embryos and thereafter. Not expressed in endoreplicating tissues.

It localises to the nucleus. In terms of biological role, cyclins are positive regulatory subunits of the cyclin-dependent kinases (CDKs), and thereby play an essential role in the control of the cell cycle, notably via their destruction during cell division. Probably functions redundantly with other cyclins in regulation of cell cycle. Its presence may be required to delay a deadline for completing cytokinesis that is ordinary imposed by nuclear envelope reformation. Degradation of CycB and CycB3 promote cytokinesis furrow initiation and ingression. Required with CycB for female fertility. The protein is G2/mitotic-specific cyclin-B3 (CycB3) of Drosophila melanogaster (Fruit fly).